The primary structure comprises 108 residues: Glutaredoxin-C10 (108 aa).

A Glutaredoxin domain is found at 1–107 (MERVAKLASE…PMLKNAGALW (107 aa)). A disulfide bridge connects residues cysteine 21 and cysteine 24. Positions 105 to 108 (ALWL) match the Responsive for interaction with TGA factors motif.

This sequence belongs to the glutaredoxin family. CC-type subfamily.

It is found in the cytoplasm. The protein localises to the nucleus. Functionally, has a glutathione-disulfide oxidoreductase activity in the presence of NADPH and glutathione reductase. Reduces low molecular weight disulfides and proteins. This Oryza sativa subsp. japonica (Rice) protein is Glutaredoxin-C10 (GRXC10).